Reading from the N-terminus, the 866-residue chain is Scm-like with four MBT domains protein 1 (866 aa).

MBT repeat units lie at residues 20–120 (LSWE…LEAP), 128–232 (SDWD…LQPP), 242–348 (AEWQ…ISPP), and 356–453 (FDWA…LSTP). Positions 34 to 42 (VPYGSFKHV) are antigenic epitope. Residues 641–777 (KKKNKRIGRP…DDENKPPSPK (137 aa)) form a disordered region. Basic residues predominate over residues 663 to 682 (KASKRRKRRKNVFVHKKKRS). The segment covering 683-694 (SASVDNTPAGSP) has biased composition (polar residues). Composition is skewed to acidic residues over residues 699–713 (GEDE…DDSL) and 721–730 (QQDELQEESE). The segment covering 737–749 (CSSSPTQSEISTS) has biased composition (low complexity). 2 positions are modified to phosphoserine: S767 and S775. The region spanning 796 to 864 (WSVADVVRFI…RIKFAFYEQF (69 aa)) is the SAM domain.

In terms of assembly, interacts with MYOD1. Component of the SLC (SFMBT1-LSD1-CoREST) corepressor complex, which also contains KDM1A/LSD1 and RCOR1/CoREST. Interacts with KDM1A/LSD1 and RCOR1/CoREST. Interacts with L3MBTL3. In terms of tissue distribution, expressed in all cell lines and normal tissues tested, including the thymus.

Its subcellular location is the nucleus. Histone-binding protein, which is part of various corepressor complexes. Mediates the recruitment of corepressor complexes to target genes, followed by chromatin compaction and repression of transcription. Plays a role during myogenesis: required for the maintenance of undifferentiated states of myogenic progenitor cells via interaction with MYOD1. Interaction with MYOD1 leads to the recruitment of associated corepressors and silencing of MYOD1 target genes. Part of the SLC complex in germ cells, where it may play a role during spermatogenesis. This is Scm-like with four MBT domains protein 1 (SFMBT1) from Homo sapiens (Human).